A 627-amino-acid chain; its full sequence is (-)-alpha-pinene synthase 2, chloroplastic (627 aa).

The transit peptide at 1-36 (MALVSIAPLASKSCLHKSLSSSAHELKTICRTIPTL) directs the protein to the chloroplast. Mg(2+) is bound by residues Asp378, Asp382, and Asp530. A DDXXD motif motif is present at residues 378–382 (DDMYD).

This sequence belongs to the terpene synthase family. Tpsd subfamily. It depends on Mg(2+) as a cofactor. Requires Mn(2+) as cofactor.

It is found in the plastid. Its subcellular location is the chloroplast. It carries out the reaction (2E)-geranyl diphosphate = (1S,5S)-beta-pinene + diphosphate. The catalysed reaction is (2E)-geranyl diphosphate = (1S,5S)-alpha-pinene + diphosphate. It participates in terpene metabolism; oleoresin biosynthesis. Terpene synthase (TPS) involved in the biosynthesis of monoterpene natural products included in conifer oleoresin secretions and volatile emissions; these compounds contribute to biotic and abiotic stress defense against herbivores and pathogens. Catalyzes the conversion of (2E)-geranyl diphosphate (GPP) to (1S,5S)-beta-pinene. This chain is (-)-alpha-pinene synthase 2, chloroplastic, found in Picea glauca (White spruce).